A 446-amino-acid chain; its full sequence is Glucose-6-phosphate isomerase (446 aa).

Glu288 serves as the catalytic Proton donor. Catalysis depends on residues His309 and Lys423.

This sequence belongs to the GPI family.

The protein resides in the cytoplasm. The enzyme catalyses alpha-D-glucose 6-phosphate = beta-D-fructose 6-phosphate. Its pathway is carbohydrate biosynthesis; gluconeogenesis. It participates in carbohydrate degradation; glycolysis; D-glyceraldehyde 3-phosphate and glycerone phosphate from D-glucose: step 2/4. Functionally, catalyzes the reversible isomerization of glucose-6-phosphate to fructose-6-phosphate. The protein is Glucose-6-phosphate isomerase of Lactobacillus delbrueckii subsp. bulgaricus (strain ATCC 11842 / DSM 20081 / BCRC 10696 / JCM 1002 / NBRC 13953 / NCIMB 11778 / NCTC 12712 / WDCM 00102 / Lb 14).